The primary structure comprises 445 residues: tRNA-2-methylthio-N(6)-dimethylallyladenosine synthase (445 aa).

The 116-residue stretch at 2 to 117 folds into the MTTase N-terminal domain; the sequence is QGLYIKSYGC…LPELIVKARK (116 aa). 6 residues coordinate [4Fe-4S] cluster: C11, C47, C80, C157, C161, and C164. One can recognise a Radical SAM core domain in the interval 143 to 374; that stretch reads KNQKVSAFIS…QELVHKQQLE (232 aa). In terms of domain architecture, TRAM spans 377 to 441; it reads KKMIGETHPV…KNHLTGIIPH (65 aa).

It belongs to the methylthiotransferase family. MiaB subfamily. In terms of assembly, monomer. [4Fe-4S] cluster serves as cofactor.

It is found in the cytoplasm. It carries out the reaction N(6)-dimethylallyladenosine(37) in tRNA + (sulfur carrier)-SH + AH2 + 2 S-adenosyl-L-methionine = 2-methylsulfanyl-N(6)-dimethylallyladenosine(37) in tRNA + (sulfur carrier)-H + 5'-deoxyadenosine + L-methionine + A + S-adenosyl-L-homocysteine + 2 H(+). Functionally, catalyzes the methylthiolation of N6-(dimethylallyl)adenosine (i(6)A), leading to the formation of 2-methylthio-N6-(dimethylallyl)adenosine (ms(2)i(6)A) at position 37 in tRNAs that read codons beginning with uridine. This is tRNA-2-methylthio-N(6)-dimethylallyladenosine synthase from Ehrlichia ruminantium (strain Gardel).